Reading from the N-terminus, the 75-residue chain is Metallothionein-like protein 1 (75 aa).

Belongs to the metallothionein superfamily. Type 15 family.

Metallothioneins have a high content of cysteine residues that bind various heavy metals. The protein is Metallothionein-like protein 1 (MTA) of Pisum sativum (Garden pea).